The primary structure comprises 410 residues: Sprouty-related, EVH1 domain-containing protein 2 (410 aa).

In terms of domain architecture, WH1 spans 5–122 (THPDDDSYIV…RGVRKAIEDL (118 aa)). Residues 127–171 (TTSSSTLHNEAELGDDDVFTTATDSSSNSSQKREPTTRTISSPTS) are disordered. The span at 146–156 (TTATDSSSNSS) shows a compositional bias: polar residues. Residues 197–252 (SYPQVTFPEDDEEIVRINPREKIWMTGYEDYRHAPVRGKYLDTTEDADSYVRFAKG) enclose the KBD domain. A phosphotyrosine mark is found at Tyr224 and Tyr227. The segment at 274–294 (DPKGSVIKTQPPRAKSRRRKE) is disordered. One can recognise an SPR domain in the interval 300–408 (RCVYCRDMFN…CRCCGGKHKA (109 aa)).

Homodimer and heterodimer. Able to interact with SPRED1 to form heterodimers. Interacts with RAS. May interact with ZDHHC13 (via ANK repeats) and ZDHHC17 (via ANK repeats). Interacts with TESK1. Interacts with NF1. In terms of processing, phosphorylated on serine and threonine residues. Phosphorylated on tyrosine. Phosphorylation of Tyr-224 and Tyr-227 are required for ubiquitination. Post-translationally, ubiquitinated; leading to degradation by the proteasome. Predominantly expressed in lung, liver and testis. In testis, it is specially found in mature spermatids projecting into the lumen of the seminiferous. Strongly expressed in glandular epithelia. Also expressed in embryonic tissues such as heart, lung, liver and brain.

It is found in the cell membrane. The protein localises to the cytoplasmic vesicle. Its subcellular location is the secretory vesicle membrane. It localises to the cytoplasm. Its function is as follows. Negatively regulates Ras signaling pathways and downstream activation of MAP kinases. Recruits and translocates NF1 to the cell membrane, thereby enabling NF1-dependent hydrolysis of active GTP-bound Ras to inactive GDP-bound Ras. Inhibits fibroblast growth factor (FGF)-induced retinal lens fiber differentiation, probably by inhibiting FGF-mediated phosphorylation of ERK1/2. Inhibits TGFB-induced epithelial-to-mesenchymal transition in lens epithelial cells. The protein is Sprouty-related, EVH1 domain-containing protein 2 (Spred2) of Mus musculus (Mouse).